The primary structure comprises 145 residues: Mitochondrial import receptor subunit TOM20 homolog (145 aa).

Topologically, residues 1-6 (MVGRNS) are mitochondrial intermembrane. A helical membrane pass occupies residues 7–24 (AIAAGVCGALFIGYCIYF). Topologically, residues 25 to 145 (DRKRRSDPNF…AQSLAEDDVE (121 aa)) are cytoplasmic. Glycyl lysine isopeptide (Lys-Gly) (interchain with G-Cter in ubiquitin) cross-links involve residues Lys-35, Lys-56, Lys-61, and Lys-68. Residues Ser-135 and Ser-138 each carry the phosphoserine modification.

This sequence belongs to the Tom20 family. As to quaternary structure, forms part of the preprotein translocase complex of the outer mitochondrial membrane (TOM complex) which consists of at least 7 different proteins (TOMM5, TOMM6, TOMM7, TOMM20, TOMM22, TOMM40 and TOMM70). Interacts with TOM22. Interacts with APEX1. Interacts with TBC1D21. Upon mitochondrial depolarization, interacts with PINK1; the interaction is required for PINK1-TOM-TIM23 supercomplex formation which is critical for PINK1 stabilization at the outer mitochondrial membrane, kinase activation and downstream mitophagy. Post-translationally, ubiquitinated by PRKN during mitophagy, leading to its degradation and enhancement of mitophagy. Deubiquitinated by USP30.

It localises to the mitochondrion outer membrane. Functionally, central component of the receptor complex responsible for the recognition and translocation of cytosolically synthesized mitochondrial preproteins. Together with TOM22 functions as the transit peptide receptor at the surface of the mitochondrion outer membrane and facilitates the movement of preproteins into the TOM40 translocation pore. Required for the translocation across the mitochondrial outer membrane of cytochrome P450 monooxygenases. This is Mitochondrial import receptor subunit TOM20 homolog (TOMM20) from Bos taurus (Bovine).